Here is an 815-residue protein sequence, read N- to C-terminus: uncharacterized protein (815 aa).

Positions 1 to 25 (MVVMKKKRILIVSAIVLLFLTVASA) are cleaved as a signal peptide. Helical transmembrane passes span 127–147 (FGEA…CVRG), 157–177 (ILFI…GYYM), 311–331 (SFIA…LAFF), 333–353 (FLLQ…FILA), 372–392 (VYLL…TCFI), and 401–421 (GFGM…IGFH). A disordered region spans residues 483 to 815 (KDGSNADGVT…DRLRRDERTR (333 aa)). Positions 513–543 (HAISRTPQKETANGIANHNSRSLKRNPQTLS) are enriched in polar residues. 2 stretches are compositionally biased toward basic and acidic residues: residues 544–563 (KEQE…ENKQ) and 599–614 (QDKK…KEYV). The segment covering 619–630 (KQPNNQQQTDDA) has biased composition (polar residues). The segment covering 648–658 (ENEKDTERTDQ) has biased composition (basic and acidic residues). The segment covering 665–678 (EQNQNLETDQQQDF) has biased composition (polar residues). Residues 696–705 (KTAEIKRSDQ) are compositionally biased toward basic and acidic residues. Residues 720–732 (SPQSTKVENQPIA) are compositionally biased toward polar residues. Basic and acidic residues predominate over residues 734–757 (NERKIRPSEPAKVHSDGIRVDEKQ). Residues 773–793 (PSSQTIKRTEQSVNSFDQVSL) are compositionally biased toward polar residues. A compositionally biased stretch (basic and acidic residues) spans 796 to 815 (IARRSSSKVEDRLRRDERTR).

It is found in the cell membrane. This is an uncharacterized protein from Bacillus subtilis (strain 168).